Consider the following 384-residue polypeptide: Anhydro-N-acetylmuramic acid kinase (384 aa).

An ATP-binding site is contributed by 12–19 (GTSLDGVD).

This sequence belongs to the anhydro-N-acetylmuramic acid kinase family.

The catalysed reaction is 1,6-anhydro-N-acetyl-beta-muramate + ATP + H2O = N-acetyl-D-muramate 6-phosphate + ADP + H(+). It participates in amino-sugar metabolism; 1,6-anhydro-N-acetylmuramate degradation. It functions in the pathway cell wall biogenesis; peptidoglycan recycling. Catalyzes the specific phosphorylation of 1,6-anhydro-N-acetylmuramic acid (anhMurNAc) with the simultaneous cleavage of the 1,6-anhydro ring, generating MurNAc-6-P. Is required for the utilization of anhMurNAc either imported from the medium or derived from its own cell wall murein, and thus plays a role in cell wall recycling. The polypeptide is Anhydro-N-acetylmuramic acid kinase (Cronobacter sakazakii (strain ATCC BAA-894) (Enterobacter sakazakii)).